The following is a 780-amino-acid chain: Protein SAV (780 aa).

ATP contacts are provided by residues 253–260 (GPPGTGKT) and 528–535 (GPPGTGKT).

This sequence belongs to the AAA ATPase family. CDC48 subfamily.

Functionally, not yet known, shows ATPase activity. This is Protein SAV (sav) from Sulfolobus acidocaldarius (strain ATCC 33909 / DSM 639 / JCM 8929 / NBRC 15157 / NCIMB 11770).